The sequence spans 149 residues: Cytochrome c-555 (149 aa).

The first 20 residues, 1–20 (MKRTMIVVTTLLLGAGAVMA), serve as a signal peptide directing secretion. Heme c contacts are provided by Met-32, Cys-137, Cys-140, and His-141.

As to quaternary structure, monomer. Binds 1 heme c group covalently per subunit.

It localises to the periplasm. Its function is as follows. Low-spin monoheme cytochrome. The chain is Cytochrome c-555 (cycC) from Bradyrhizobium diazoefficiens (strain JCM 10833 / BCRC 13528 / IAM 13628 / NBRC 14792 / USDA 110).